The following is a 142-amino-acid chain: Hemoglobin subunit alpha (142 aa).

N-acetylserine is present on S1. Residues 1–142 (SLSDKDKAAV…VALALAERYR (142 aa)) enclose the Globin domain. An O2-binding site is contributed by H59. A heme b-binding site is contributed by H88.

It belongs to the globin family. In terms of assembly, hb1 is a heterotetramer of two alpha chains and two beta-1 chains, while Hb2 is a heterotetramer of two alpha chains and two beta-2 chains. As to expression, red blood cells.

Involved in oxygen transport from gills to the various peripheral tissues. The chain is Hemoglobin subunit alpha (hba) from Cygnodraco mawsoni (Antarctic dragonfish).